Consider the following 278-residue polypeptide: ATP synthase subunit a (278 aa).

6 helical membrane passes run T43 to F63, I104 to I124, D148 to I168, I191 to L211, L222 to V242, and L249 to V269.

Belongs to the ATPase A chain family. F-type ATPases have 2 components, CF(1) - the catalytic core - and CF(0) - the membrane proton channel. CF(1) has five subunits: alpha(3), beta(3), gamma(1), delta(1), epsilon(1). CF(0) has three main subunits: a(1), b(2) and c(9-12). The alpha and beta chains form an alternating ring which encloses part of the gamma chain. CF(1) is attached to CF(0) by a central stalk formed by the gamma and epsilon chains, while a peripheral stalk is formed by the delta and b chains.

It is found in the cell inner membrane. Its function is as follows. Key component of the proton channel; it plays a direct role in the translocation of protons across the membrane. This chain is ATP synthase subunit a, found in Shewanella baltica (strain OS185).